The sequence spans 117 residues: MVKKMVIAVRKDLDMGKGKIAAQVAHAAVTCAIRSMKINRDVFNEWYDEGQRKIVVKVNDLDEIMEIKRMADSMGIVNEIVQDRGYTQVEPGTITCIGLGPDEEEKLDKITGKYKLL.

The protein belongs to the PTH2 family.

Its subcellular location is the cytoplasm. The catalysed reaction is an N-acyl-L-alpha-aminoacyl-tRNA + H2O = an N-acyl-L-amino acid + a tRNA + H(+). In terms of biological role, the natural substrate for this enzyme may be peptidyl-tRNAs which drop off the ribosome during protein synthesis. The polypeptide is Peptidyl-tRNA hydrolase (Thermoplasma acidophilum (strain ATCC 25905 / DSM 1728 / JCM 9062 / NBRC 15155 / AMRC-C165)).